Consider the following 298-residue polypeptide: ATP synthase F(1) complex subunit gamma, mitochondrial (298 aa).

Residues 1-25 constitute a mitochondrion transit peptide; the sequence is MFSRASVVGLSACAVQPQWIQVRNM. An N6-acetyllysine modification is found at lysine 39. N6-succinyllysine is present on lysine 49. The residue at position 55 (lysine 55) is an N6-acetyllysine. N6-acetyllysine; alternate is present on lysine 115. Lysine 115 is modified (N6-succinyllysine; alternate). Lysine 138 bears the N6-acetyllysine mark. Serine 146 bears the Phosphoserine mark. Lysine 154 bears the N6-acetyllysine; alternate mark. At lysine 154 the chain carries N6-succinyllysine; alternate. The residue at position 197 (lysine 197) is an N6-acetyllysine. Lysine 270 carries the N6-succinyllysine modification.

The protein belongs to the ATPase gamma chain family. Component of the ATP synthase complex composed at least of ATP5F1A/subunit alpha, ATP5F1B/subunit beta, ATP5MC1/subunit c (homooctomer), MT-ATP6/subunit a, MT-ATP8/subunit 8, ATP5ME/subunit e, ATP5MF/subunit f, ATP5MG/subunit g, ATP5MK/subunit k, ATP5MJ/subunit j, ATP5F1C/subunit gamma, ATP5F1D/subunit delta, ATP5F1E/subunit epsilon, ATP5PF/subunit F6, ATP5PB/subunit b, ATP5PD/subunit d, ATP5PO/subunit OSCP. ATP synthase complex consists of a soluble F(1) head domain (subunits alpha(3) and beta(3)) - the catalytic core - and a membrane F(0) domain - the membrane proton channel (subunits c, a, 8, e, f, g, k and j). These two domains are linked by a central stalk (subunits gamma, delta, and epsilon) rotating inside the F1 region and a stationary peripheral stalk (subunits F6, b, d, and OSCP). Interacts with FLVCR2; this interaction occurs in the absence of heme and is disrupted upon heme binding.

It localises to the mitochondrion inner membrane. Functionally, subunit gamma, of the mitochondrial membrane ATP synthase complex (F(1)F(0) ATP synthase or Complex V) that produces ATP from ADP in the presence of a proton gradient across the membrane which is generated by electron transport complexes of the respiratory chain. ATP synthase complex consist of a soluble F(1) head domain - the catalytic core - and a membrane F(1) domain - the membrane proton channel. These two domains are linked by a central stalk rotating inside the F(1) region and a stationary peripheral stalk. During catalysis, ATP synthesis in the catalytic domain of F(1) is coupled via a rotary mechanism of the central stalk subunits to proton translocation. In vivo, can only synthesize ATP although its ATP hydrolase activity can be activated artificially in vitro. With the central stalk subunit delta, is essential for the biogenesis of F(1) catalytic part of the ATP synthase complex namely in the formation of F1 assembly intermediate. This chain is ATP synthase F(1) complex subunit gamma, mitochondrial, found in Mus musculus (Mouse).